The following is a 649-amino-acid chain: Solute carrier family 22 member 16 (649 aa).

Residues 19–39 (FQIVLYLICAYQSLSCGIHYL) traverse the membrane as a helical segment. N65 and N108 each carry an N-linked (GlcNAc...) asparagine glycan. The next 5 helical transmembrane spans lie at 156 to 176 (MIQPLIIFGVMLGSITFSYLS), 190 to 210 (IGVFFFGIASLFIFDYLSFMI), 214 to 234 (FLVMASSGYFVVVFVYVMEII), 244 to 264 (IHLNTFFAIGAMLVALASYLL), and 268 to 288 (WLYQIILCIVTTPFILCCWML). N315 carries an N-linked (GlcNAc...) asparagine glycan. The next 6 helical transmembrane spans lie at 356 to 376 (AKMTLIVWLDWFTANLGYYMF), 389 to 409 (LYLLLVGAMEIPAYICLCIWL), 417 to 437 (TMLLFLLVSSLTCMLHVVMPS), 445 to 465 (MVALLVKSVISSVFAFIYLYT), 475 to 495 (CLAVGSSNMVSHVSSIFIPFT), and 501 to 521 (VWIFLPQILFGILAILSGLLS). Polar residues predominate over residues 530–544 (TPMKSTWETTEQQVP). Disordered regions lie at residues 530–560 (TPMKSTWETTEQQVPENKDSLGEGPPDSFER) and 579–649 (SPDA…LGGF).

It belongs to the major facilitator (TC 2.A.1) superfamily. Organic cation transporter (TC 2.A.1.19) family.

Its subcellular location is the cell membrane. It catalyses the reaction (R)-carnitine(in) = (R)-carnitine(out). The enzyme catalyses spermidine(in) = spermidine(out). Functionally, facilitative organic cation transporter that mediates the transport of carnitine as well as the polyamine spermidine. Mediates the partially Na(+)-dependent bidirectional transport of carnitine. May mediate L-carnitine secretion from testis epididymal epithelium into the lumen which is involved in the maturation of spermatozoa. This is Solute carrier family 22 member 16 from Mus musculus (Mouse).